We begin with the raw amino-acid sequence, 121 residues long: Putative membrane protein insertion efficiency factor (121 aa).

Positions 97-121 (VPARRDRHAGGRRCCPANVDEQRST) are disordered.

The protein belongs to the UPF0161 family.

Its subcellular location is the cell membrane. Functionally, could be involved in insertion of integral membrane proteins into the membrane. The sequence is that of Putative membrane protein insertion efficiency factor from Rhodococcus jostii (strain RHA1).